The following is a 221-amino-acid chain: Large ribosomal subunit protein uL3 (221 aa).

Belongs to the universal ribosomal protein uL3 family. In terms of assembly, part of the 50S ribosomal subunit. Forms a cluster with proteins L14 and L19.

Its function is as follows. One of the primary rRNA binding proteins, it binds directly near the 3'-end of the 23S rRNA, where it nucleates assembly of the 50S subunit. This Chlamydia trachomatis serovar L2 (strain ATCC VR-902B / DSM 19102 / 434/Bu) protein is Large ribosomal subunit protein uL3.